Reading from the N-terminus, the 256-residue chain is Zinc metalloprotease (256 aa).

The active-site Proton donor is the H74.

This sequence belongs to the peptidase M4 family. It depends on Zn(2+) as a cofactor.

It is found in the secreted. Its function is as follows. May play a role in ulcer formation. Proteolytic digestion of gastric mucus has been suggested as an important mechanism by which its pathogenicity is at least partly exerted. This chain is Zinc metalloprotease (hap), found in Helicobacter pylori (Campylobacter pylori).